The following is a 384-amino-acid chain: Probable peptidoglycan glycosyltransferase FtsW (384 aa).

Topologically, residues 1–19 are cytoplasmic; that stretch reads MAAVWRWFVPERPSFYDRG. Residues 20–40 form a helical membrane-spanning segment; it reads LLALTFSLMGIGLMMVASASI. Residues 41–54 lie on the Periplasmic side of the membrane; sequence KEGPGGDMFYFTKR. Residues 55-75 traverse the membrane as a helical segment; sequence HLIFLFVCLGIGVGTLYLPLE. Residues 76-83 lie on the Cytoplasmic side of the membrane; that stretch reads RWREWSGR. A helical membrane pass occupies residues 84-104; it reads LLVGALGLLFAVLAVGRTVNG. Over 105-110 the chain is Periplasmic; sequence AKRWIG. Residues 111 to 131 traverse the membrane as a helical segment; sequence FGFFNIQPAELAKLALIVFIA. The Cytoplasmic portion of the chain corresponds to 132–143; the sequence is SYLVRRSDEVRG. Residues 144–164 traverse the membrane as a helical segment; the sequence is NIAGFVKPLAVVFLLAIMLLA. Topologically, residues 165 to 166 are periplasmic; the sequence is QP. Residues 167–187 traverse the membrane as a helical segment; the sequence is DLGSVVVLFVCTFGLLFIGGA. Position 188 (Lys188) is a topological domain, cytoplasmic. The helical transmembrane segment at 189–209 threads the bilayer; sequence LVQFIAIIVAGLSALAGLIIY. At 210–267 the chain is on the periplasmic side; that stretch reads EPYRLRRVTSFLDPWADPFGSGYQLTQSLMAFGRGGFFGQGLGNSVQKLSYLPEAHTD. A helical transmembrane segment spans residues 268 to 288; the sequence is FVFAILGEELGYFGVLVVLFL. Residues 289–316 lie on the Cytoplasmic side of the membrane; that stretch reads QLLLAMKALQIGRTALLRSKFFEGYMAC. The helical transmembrane segment at 317-337 threads the bilayer; that stretch reads GIGIWFSFQTVVNVGAAAGML. Over 338 to 343 the chain is Periplasmic; that stretch reads PTKGLT. Residues 344–364 form a helical membrane-spanning segment; it reads LPLVSYGGSSLIAITMAVAIL. At 365–384 the chain is on the cytoplasmic side; the sequence is LRIDFERRLDTSHVIQREAA.

It belongs to the SEDS family. FtsW subfamily.

It localises to the cell inner membrane. The enzyme catalyses [GlcNAc-(1-&gt;4)-Mur2Ac(oyl-L-Ala-gamma-D-Glu-L-Lys-D-Ala-D-Ala)](n)-di-trans,octa-cis-undecaprenyl diphosphate + beta-D-GlcNAc-(1-&gt;4)-Mur2Ac(oyl-L-Ala-gamma-D-Glu-L-Lys-D-Ala-D-Ala)-di-trans,octa-cis-undecaprenyl diphosphate = [GlcNAc-(1-&gt;4)-Mur2Ac(oyl-L-Ala-gamma-D-Glu-L-Lys-D-Ala-D-Ala)](n+1)-di-trans,octa-cis-undecaprenyl diphosphate + di-trans,octa-cis-undecaprenyl diphosphate + H(+). It functions in the pathway cell wall biogenesis; peptidoglycan biosynthesis. Its function is as follows. Peptidoglycan polymerase that is essential for cell division. The chain is Probable peptidoglycan glycosyltransferase FtsW from Tolumonas auensis (strain DSM 9187 / NBRC 110442 / TA 4).